The following is a 425-amino-acid chain: Type I restriction enzyme MjaVIII specificity subunit (425 aa).

Belongs to the type-I restriction system S methylase family. The type I restriction/modification system is composed of three polypeptides R, M and S.

Functionally, the specificity (S) subunit of a type I restriction enzyme; this subunit dictates DNA sequence specificity. The M and S subunits together form a methyltransferase (MTase) that methylates A-2 on the top and A-3 on the bottom strand of the sequence 5'-GAYN(5)GTAA-3'. In the presence of the R subunit the complex can also act as an endonuclease, binding to the same target sequence but cutting the DNA some distance from this site. Whether the DNA is cut or modified depends on the methylation state of the target sequence. When the target site is unmodified, the DNA is cut. When the target site is hemimethylated, the complex acts as a maintenance MTase modifying the DNA so that both strands become methylated. After locating a non-methylated recognition site, the enzyme complex serves as a molecular motor that translocates DNA in an ATP-dependent manner until a collision occurs that triggers cleavage. The chain is Type I restriction enzyme MjaVIII specificity subunit from Methanocaldococcus jannaschii (strain ATCC 43067 / DSM 2661 / JAL-1 / JCM 10045 / NBRC 100440) (Methanococcus jannaschii).